The sequence spans 426 residues: MDKGRCTILNSEELWAQARQLFAGGVNSPVRAAVKPFPFYVERGKGAYIYTVEGNKFIDYVLGYGPLILGHSPESVKRKIIEQLEKGWLFGTPSKLEIELAKKISSHIPSAQKIRFVNSGTEATMAAIRLARGYSKRSKILKFSGNYHGAHDYTLVEAGSAATEYNVTTSDGIPMEIMKTVEICEFNDLDCVDKKLRNEDIAAALLEPIMGNAGVILPEKGFLSGLRELTKSYNSLLIFDEVITGFRIDIGGAQSYYQIYPDITTLGKIIGGGFPIGAVAGKAEIIDNFTPAGRVFNAGTFNANPISMIAGIATIEELEKEYPYNIANKASKTLVEELERLLKIKHTINHIGSMFQVFFGIDKVRNYSDAKRANKEYYIKFHERLLKERVFIPPSQYETIFTSAAHEDDVVNDTIDKLAKVIGELS.

Lys268 carries the post-translational modification N6-(pyridoxal phosphate)lysine.

Belongs to the class-III pyridoxal-phosphate-dependent aminotransferase family. HemL subfamily. Pyridoxal 5'-phosphate is required as a cofactor.

Its subcellular location is the cytoplasm. It carries out the reaction (S)-4-amino-5-oxopentanoate = 5-aminolevulinate. It participates in porphyrin-containing compound metabolism; protoporphyrin-IX biosynthesis; 5-aminolevulinate from L-glutamyl-tRNA(Glu): step 2/2. In Saccharolobus islandicus (strain Y.N.15.51 / Yellowstone #2) (Sulfolobus islandicus), this protein is Glutamate-1-semialdehyde 2,1-aminomutase.